Here is a 366-residue protein sequence, read N- to C-terminus: Cellular tumor antigen p53 (366 aa).

The interval 1–41 (MMDEQGLDGMQILPGSQDSFSELWASVQTPSIATIAEEFDD) is transcription activation (acidic). A DNA-binding region spans residues 80–267 (DYPGEYGFQL…KTDEESSTKT (188 aa)). The Zn(2+) site is built by Cys-154, His-157, Cys-213, and Cys-217. The interaction with DNA stretch occupies residues 248–255 (RVCACPGR). A compositionally biased stretch (basic and acidic residues) spans 255-264 (RDRKTDEESS). Residues 255 to 305 (RDRKTDEESSTKTPNGPKQTKKRKQAPSNSAPHTTTVMKSKSSSSAEEEDK) form a disordered region. The Bipartite nuclear localization signal signature appears at 275–295 (KKRKQAPSNSAPHTTTVMKSK). Over residues 280-292 (APSNSAPHTTTVM) the composition is skewed to polar residues. The oligomerization stretch occupies residues 305–336 (KEVFTVLVKGRERYEIIKKINEAFEGAAEKEK). Residues 319–330 (EIIKKINEAFEG) carry the Nuclear export signal motif. A disordered region spans residues 332 to 366 (AEKEKAKNKVAVKQELPVPSSGKRLVQRGERSDSD). Residues 341-362 (VAVKQELPVPSSGKRLVQRGER) are basic (repression of DNA-binding).

This sequence belongs to the p53 family. As to quaternary structure, binds DNA as a homotetramer. Requires Zn(2+) as cofactor.

It localises to the cytoplasm. The protein localises to the nucleus. Functionally, multifunctional transcription factor that induces cell cycle arrest, DNA repair or apoptosis upon binding to its target DNA sequence. Acts as a tumor suppressor in many tumor types; induces growth arrest or apoptosis depending on the physiological circumstances and cell type. Negatively regulates cell division by controlling expression of a set of genes required for this process. One of the activated genes is an inhibitor of cyclin-dependent kinases. Apoptosis induction seems to be mediated either by stimulation of BAX and FAS antigen expression, or by repression of Bcl-2 expression. The polypeptide is Cellular tumor antigen p53 (tp53) (Platichthys flesus (European flounder)).